We begin with the raw amino-acid sequence, 25 residues long: Caerin-1.2 (25 aa).

Leu25 carries the leucine amide modification.

As to expression, expressed by the skin parotoid and/or rostral glands.

It localises to the secreted. In terms of biological role, antibacterial peptide, that adopts an alpha helical conformation which can disrupt bacterial membranes. Each caerin displays a different antimicrobial specificity. This chain is Caerin-1.2, found in Ranoidea caerulea (Green tree frog).